The chain runs to 511 residues: Histidine ammonia-lyase (511 aa).

The segment at residues 143–145 (ASG) is a cross-link (5-imidazolinone (Ala-Gly)). Residue S144 is modified to 2,3-didehydroalanine (Ser).

The protein belongs to the PAL/histidase family. In terms of processing, contains an active site 4-methylidene-imidazol-5-one (MIO), which is formed autocatalytically by cyclization and dehydration of residues Ala-Ser-Gly.

It is found in the cytoplasm. The enzyme catalyses L-histidine = trans-urocanate + NH4(+). Its pathway is amino-acid degradation; L-histidine degradation into L-glutamate; N-formimidoyl-L-glutamate from L-histidine: step 1/3. The sequence is that of Histidine ammonia-lyase from Idiomarina loihiensis (strain ATCC BAA-735 / DSM 15497 / L2-TR).